The sequence spans 189 residues: Potassium-transporting ATPase KdpC subunit (189 aa).

A helical transmembrane segment spans residues 10–30 (VIFAMLTLICGVIYPYAITGI).

Belongs to the KdpC family. The system is composed of three essential subunits: KdpA, KdpB and KdpC.

The protein resides in the cell inner membrane. In terms of biological role, part of the high-affinity ATP-driven potassium transport (or Kdp) system, which catalyzes the hydrolysis of ATP coupled with the electrogenic transport of potassium into the cytoplasm. This subunit acts as a catalytic chaperone that increases the ATP-binding affinity of the ATP-hydrolyzing subunit KdpB by the formation of a transient KdpB/KdpC/ATP ternary complex. The sequence is that of Potassium-transporting ATPase KdpC subunit from Janthinobacterium sp. (strain Marseille) (Minibacterium massiliensis).